Consider the following 220-residue polypeptide: Glycerol-3-phosphate acyltransferase (220 aa).

The next 5 membrane-spanning stretches (helical) occupy residues leucine 4–valine 24, valine 53–alanine 73, proline 80–phenylalanine 100, methionine 116–valine 136, and glycine 138–isoleucine 158. Residues tryptophan 193 to lysine 220 form a disordered region. Basic and acidic residues predominate over residues valine 210–lysine 220.

It belongs to the PlsY family. In terms of assembly, probably interacts with PlsX.

The protein resides in the cell inner membrane. It carries out the reaction an acyl phosphate + sn-glycerol 3-phosphate = a 1-acyl-sn-glycero-3-phosphate + phosphate. The protein operates within lipid metabolism; phospholipid metabolism. Catalyzes the transfer of an acyl group from acyl-phosphate (acyl-PO(4)) to glycerol-3-phosphate (G3P) to form lysophosphatidic acid (LPA). This enzyme utilizes acyl-phosphate as fatty acyl donor, but not acyl-CoA or acyl-ACP. This is Glycerol-3-phosphate acyltransferase from Aeromonas salmonicida (strain A449).